Consider the following 217-residue polypeptide: Protein-L-isoaspartate O-methyltransferase (217 aa).

Ser65 is an active-site residue.

The protein belongs to the methyltransferase superfamily. L-isoaspartyl/D-aspartyl protein methyltransferase family.

Its subcellular location is the cytoplasm. It carries out the reaction [protein]-L-isoaspartate + S-adenosyl-L-methionine = [protein]-L-isoaspartate alpha-methyl ester + S-adenosyl-L-homocysteine. In terms of biological role, catalyzes the methyl esterification of L-isoaspartyl residues in peptides and proteins that result from spontaneous decomposition of normal L-aspartyl and L-asparaginyl residues. It plays a role in the repair and/or degradation of damaged proteins. This Chlorobium limicola (strain DSM 245 / NBRC 103803 / 6330) protein is Protein-L-isoaspartate O-methyltransferase.